Consider the following 745-residue polypeptide: Immunoglobulin superfamily containing leucine-rich repeat protein 2 (745 aa).

An N-terminal signal peptide occupies residues 1 to 18 (MFPLRALWLVWALLGVAG). One can recognise an LRRNT domain in the interval 19-51 (SCPEPCACVDKYAHQFADCAYKELREVPEGLPA). Residues 19 to 589 (SCPEPCACVD…VFSTKKELPS (571 aa)) lie on the Extracellular side of the membrane. N-linked (GlcNAc...) asparagine glycosylation is present at asparagine 52. LRR repeat units lie at residues 52-73 (NVTTLSLSANKITVLRRGAFAD), 76-97 (QVTSLWLAHNEVRTVEPGALAV), 100-123 (QLKNLDLSHNFISSFPWSDLRNLS), 124-145 (ALQLLKMNHNRLGSLPRDALGA), and 148-169 (DLRSLRINNNRLRTLAPGTFDA). An N-linked (GlcNAc...) asparagine glycan is attached at asparagine 121. One can recognise an LRRCT domain in the interval 181-232 (NPFHCGCGLVWLQAWAASTRVSLPEPDSIACASPPALQGVPVYRLPALPCAP). An Ig-like domain is found at 233–371 (PSVHLSAEPP…GANSTSIRVA (139 aa)). An intrachain disulfide couples cysteine 260 to cysteine 355. Residues 287–326 (VLSGEDDGVGAEEGEGEGDGDLLTQTQAQTPTPAPAWPAP) are disordered. The segment covering 290 to 306 (GEDDGVGAEEGEGEGDG) has biased composition (acidic residues). N-linked (GlcNAc...) asparagine glycosylation is found at asparagine 337 and asparagine 364. Residues 375 to 466 (TGPPKHAPGA…QRCGNGDPSR (92 aa)) form a disordered region. Acidic residues predominate over residues 431–449 (TETEPEEDTSEGEEAEDQI). Residues asparagine 474 and asparagine 563 are each glycosylated (N-linked (GlcNAc...) asparagine). Residues 590 to 610 (LLVIVAVSVFLLVLATVPLLG) form a helical membrane-spanning segment. The Cytoplasmic portion of the chain corresponds to 611–745 (AACCHLLAKH…INGNYRQTAG (135 aa)). Positions 656–722 (KSYPAGGEAG…FEAGSEYSDR (67 aa)) are disordered. A compositionally biased stretch (acidic residues) spans 665 to 683 (GGEEPEDVQGEGLDEDAEQ). The residue at position 719 (tyrosine 719) is a Phosphotyrosine. Residue serine 720 is modified to Phosphoserine.

Homomultimer. Interacts with NTRK1/TrkA.

Its subcellular location is the cell membrane. Functionally, required for axon extension during neural development. The chain is Immunoglobulin superfamily containing leucine-rich repeat protein 2 (ISLR2) from Homo sapiens (Human).